The following is a 444-amino-acid chain: Transcription activator AKTR-1 (444 aa).

Residues 16–43 (CDFCTQSKLRCNKNKPSCRRCTIQQQPC) constitute a DNA-binding region (zn(2)-C6 fungal-type). The segment at 49–87 (RRTGRPPKHPRKANDCQEANGQHGEQDPVTSTPGGSCQQ) is disordered. Residues 50–59 (RTGRPPKHPR) are compositionally biased toward basic residues. Polar residues predominate over residues 76–87 (PVTSTPGGSCQQ).

It is found in the nucleus. In terms of biological role, transcription factor that regulates the expression of the gene clusters that mediate the biosynthesis of the host-selective toxins (HSTs) AK-toxins responsible for Japanese pear black spot disease by the Japanese pear pathotype. AK-toxins are esters of 9,10-epoxy 8-hydroxy 9-methyldecatrienoic acid (EDA). On cellular level, AK-toxins affect plasma membrane of susceptible cells and cause a sudden increase in loss of K(+) after a few minutes of toxin treatment. This Alternaria alternata (Alternaria rot fungus) protein is Transcription activator AKTR-1.